Reading from the N-terminus, the 276-residue chain is MANYTAADIKALRERTGAGMLDVKKALDEADGDAQKAQEIIRVKGLKGVTKREGRSTAEGIVLARTENNVGYMVEVNSETDFVAKSAPFVEFGNKVLDAAVAADAADLDALLAAEVDGKPISELVTETGALLGEKVVVRRVARVAGDHVAVYLHKTSKDLPAQVGVLLAVSGADAETAAHDVAVHIAAMSPAFLSEEDVPAETVENEKRVAEETARNEGKPEKIIPNIVQGRLKGYYKDVVLVDQDFAKDSKKSVGQVLSEAGATATAFARFRVGA.

The segment at 80–83 (TDFV) is involved in Mg(2+) ion dislocation from EF-Tu.

Belongs to the EF-Ts family.

The protein localises to the cytoplasm. Functionally, associates with the EF-Tu.GDP complex and induces the exchange of GDP to GTP. It remains bound to the aminoacyl-tRNA.EF-Tu.GTP complex up to the GTP hydrolysis stage on the ribosome. This chain is Elongation factor Ts, found in Kocuria rhizophila (strain ATCC 9341 / DSM 348 / NBRC 103217 / DC2201).